The primary structure comprises 154 residues: Protein X (154 aa).

A mitochondrial targeting sequence region spans residues 68–117; that stretch reads PCALRFTSARRMETTVNAHWNLPKVLHKRTLGLSAMSTTDLEAYFKDCVF.

The protein belongs to the orthohepadnavirus protein X family. As to quaternary structure, may form homodimer. May interact with host CEBPA, CFLAR, CREB1, DDB1, E4F1, HBXIP, HSPD1/HSP60, NFKBIA, POLR2E and SMAD4. Interacts with host SMC5-SMC6 complex and induces its degradation. Interacts with host TRPC4AP; leading to prevent ubiquitination of TRPC4AP. Interacts with host PLSCR1; this interaction promotes ubiquitination and degradation of HBx and impairs HBx-mediated cell proliferation. In terms of processing, a fraction may be phosphorylated in insect cells and HepG2 cells, a human hepatoblastoma cell line. Phosphorylated in vitro by host protein kinase C or mitogen-activated protein kinase. N-acetylated in insect cells.

It localises to the host cytoplasm. The protein localises to the host nucleus. Its subcellular location is the host mitochondrion. In terms of biological role, multifunctional protein that plays a role in silencing host antiviral defenses and promoting viral transcription. Does not seem to be essential for HBV infection. May be directly involved in development of cirrhosis and liver cancer (hepatocellular carcinoma). Most of cytosolic activities involve modulation of cytosolic calcium. The effect on apoptosis is controversial depending on the cell types in which the studies have been conducted. May induce apoptosis by localizing in mitochondria and causing loss of mitochondrial membrane potential. May also modulate apoptosis by binding host CFLAR, a key regulator of the death-inducing signaling complex (DISC). Promotes viral transcription by using the host E3 ubiquitin ligase DDB1 to target the SMC5-SMC6 complex to proteasomal degradation. This host complex would otherwise bind to viral episomal DNA, and prevents its transcription. Moderately stimulates transcription of many different viral and cellular transcription elements. Promoters and enhancers stimulated by HBx contain DNA binding sites for NF-kappa-B, AP-1, AP-2, c-EBP, ATF/CREB, or the calcium-activated factor NF-AT. The polypeptide is Protein X (Hepatitis B virus genotype B2 (isolate Vietnam/9873/1997) (HBV-B)).